Here is a 314-residue protein sequence, read N- to C-terminus: Ribosomal RNA small subunit methyltransferase H (314 aa).

S-adenosyl-L-methionine contacts are provided by residues 37–39 (GGH), Asp-57, Phe-83, Asp-105, and Gln-112.

The protein belongs to the methyltransferase superfamily. RsmH family.

The protein localises to the cytoplasm. The enzyme catalyses cytidine(1402) in 16S rRNA + S-adenosyl-L-methionine = N(4)-methylcytidine(1402) in 16S rRNA + S-adenosyl-L-homocysteine + H(+). In terms of biological role, specifically methylates the N4 position of cytidine in position 1402 (C1402) of 16S rRNA. The chain is Ribosomal RNA small subunit methyltransferase H from Thioalkalivibrio sulfidiphilus (strain HL-EbGR7).